The sequence spans 605 residues: MATDNARPRSRSLRRKSMGAEAALRDGAAQPAAAHKTKVIARSETGDDADEDAGADRDPGTRRGIDPWKLEPANDPFASNKEYGGKWGANGPADSAAKVLAAAWDIMALVDAEEVAKEQETFEAKTSPVSPFGAWPGGQSWRTLGDYSHAPILYPSAEVIEADALKVGAYVSRVVQCSRFVADKKAQRPTVRSLQSFLEAAFWRVMQNAYSTCLRLRPKLTAVSRSRRSGANWRKPSPSDPNWYAVSNQFLWRGMRVPSLLLPPDVPIEENAERGPTAAVFRNAGPALFIWPWARAPLDERDKRLVRAALWALDILDAAILASFPYAWRPHVGDKQFEEALDCLAEYFGLAVLLTETVLAALLDHTLAFMKSLGAGNYDDFEEDRFADPGKNKYLMGVEGVSLTRLNSAGTALATVCANTYAALRCLPSVATSSLTANYSAETRRARKPTREDLFSLLQHEALFYTIWLQRMATHLDFCSNVLVESAKKGKQEFPIRRSALVRHMWLQKLLSPLVVPVSLRDFAAAKKEAVADAKIETYVKSVQSTNKDPKGTIRFIASDNVKTLMASYEKYNPILDEPMIASRAFDDVISGYGGRTAGGQNRGD.

The segment at 1-75 (MATDNARPRS…DPWKLEPAND (75 aa)) is disordered. Residues 8-17 (PRSRSLRRKS) are compositionally biased toward basic residues. The span at 54–69 (GADRDPGTRRGIDPWK) shows a compositional bias: basic and acidic residues.

The protein belongs to the alphaherpesvirinae HHV-1 UL47 family. In terms of assembly, interacts with US3 kinase. Interacts with UL31 and UL34; these interactions seem important for efficient virion nuclear egress. Interacts with UL41/VHS. In terms of processing, phosphorylated by US3. This phosphorylation is required for proper nuclear localization.

The protein resides in the virion tegument. It localises to the host nucleus. The protein localises to the host cytoplasm. In terms of biological role, tegument protein that can bind to various RNA transcripts. Plays a role in the attenuation of selective viral and cellular mRNA degradation by modulating the activity of host shutoff RNase UL41/VHS. Also plays a role in the primary envelopment of virions in the perinuclear space, probably by interacting with two nuclear egress proteins UL31 and UL34. The protein is Tegument protein UL47 homolog (sORF1) of Amazona oratrix (yellow-headed parrot).